The chain runs to 285 residues: 4-diphosphocytidyl-2-C-methyl-D-erythritol kinase (285 aa).

The active site involves lysine 14. An ATP-binding site is contributed by 97–107 (PMGGGIGGGSS). The active site involves aspartate 139.

Belongs to the GHMP kinase family. IspE subfamily.

The catalysed reaction is 4-CDP-2-C-methyl-D-erythritol + ATP = 4-CDP-2-C-methyl-D-erythritol 2-phosphate + ADP + H(+). It participates in isoprenoid biosynthesis; isopentenyl diphosphate biosynthesis via DXP pathway; isopentenyl diphosphate from 1-deoxy-D-xylulose 5-phosphate: step 3/6. Catalyzes the phosphorylation of the position 2 hydroxy group of 4-diphosphocytidyl-2C-methyl-D-erythritol. The chain is 4-diphosphocytidyl-2-C-methyl-D-erythritol kinase from Tolumonas auensis (strain DSM 9187 / NBRC 110442 / TA 4).